A 505-amino-acid chain; its full sequence is Deoxyguanosinetriphosphate triphosphohydrolase (505 aa).

The region spanning 66–273 (RLTHSMEVQQ…MEAADDISYC (208 aa)) is the HD domain.

The protein belongs to the dGTPase family. Type 1 subfamily. As to quaternary structure, homotetramer. It depends on Mg(2+) as a cofactor.

It carries out the reaction dGTP + H2O = 2'-deoxyguanosine + triphosphate + H(+). In terms of biological role, dGTPase preferentially hydrolyzes dGTP over the other canonical NTPs. In Salmonella arizonae (strain ATCC BAA-731 / CDC346-86 / RSK2980), this protein is Deoxyguanosinetriphosphate triphosphohydrolase.